Reading from the N-terminus, the 318-residue chain is MAAAAVSGALGRAGWRLLQLRCLPVARCRQALVPRAFHASAVGLRSSDEQKQQPPNSFSQQHSETQGAEKPDPESSHSPPRYTDQGGEEEEDYESEEQLQHRILTAALEFVPAHGWTAEAIAEGAQSLGLSSAAASMFGKDGSELILHFVTQCNTRLTRVLEEEQKLVQLGQAEKRKTDQFLRDAVETRLRMLIPYIEHWPRALSILMLPHNIPSSLSLLTSMVDDMWHYAGDQSTDFNWYTRRAMLAAIYNTTELVMMQDSSPDFEDTWRFLENRVNDAMNMGHTAKQVKSTGEALVQGLMGAAVTLKNLTGLNQRR.

The transit peptide at 1-44 (MAAAAVSGALGRAGWRLLQLRCLPVARCRQALVPRAFHASAVGL) directs the protein to the mitochondrion. The SIFI-degron signature appears at 16–31 (RLLQLRCLPVARCRQA). The disordered stretch occupies residues 44–98 (LRSSDEQKQQPPNSFSQQHSETQGAEKPDPESSHSPPRYTDQGGEEEEDYESEEQ). Residues 52 to 66 (QQPPNSFSQQHSETQ) show a composition bias toward polar residues. Residues 86 to 97 (GGEEEEDYESEE) are compositionally biased toward acidic residues. Lysine 175 carries the post-translational modification N6-acetyllysine. Residue arginine 244 participates in a 1,2-diacylglycero-3-phosphoethanolamine binding.

The protein belongs to the COQ9 family. In terms of assembly, homodimer. Heterodimer; two heterodimers of COQ7:COQ9 come together on the same side of the lipid pseudo-bilayer and form a curved tetramer with a hydrophobic surface suitable for membrane interaction. These two tetramers assemble into a soluble octamer with a pseudo-bilayer of lipids captured within. Interacts with COQ7; this interaction allows ubiquinone (CoQ) isoprene intermediates presentation to COQ7 and facilitates the COQ7-mediated hydroxylase step. In terms of processing, in response to mitochondrial stress, the precursor protein is ubiquitinated by the SIFI complex in the cytoplasm before mitochondrial import, leading to its degradation. Within the SIFI complex, UBR4 initiates ubiquitin chain that are further elongated or branched by KCMF1.

The protein localises to the mitochondrion. It functions in the pathway cofactor biosynthesis; ubiquinone biosynthesis. Membrane-associated protein that warps the membrane surface to access and bind aromatic isoprenes with high specificity, including ubiquinone (CoQ) isoprene intermediates and presents them directly to COQ7, therefore facilitating the COQ7-mediated hydroxylase step. Participates in the biosynthesis of coenzyme Q, also named ubiquinone, an essential lipid-soluble electron transporter for aerobic cellular respiration. The protein is Ubiquinone biosynthesis protein COQ9, mitochondrial of Homo sapiens (Human).